We begin with the raw amino-acid sequence, 445 residues long: Chromosome partition protein MukF (445 aa).

Residues 213–241 (LSETSSTLRELQDTLQAASDELQTQILDI) form a leucine-zipper region.

The protein belongs to the MukF family. As to quaternary structure, interacts, and probably forms a ternary complex, with MukE and MukB via its C-terminal region. The complex formation is stimulated by calcium or magnesium. It is required for an interaction between MukE and MukB.

The protein localises to the cytoplasm. It is found in the nucleoid. In terms of biological role, involved in chromosome condensation, segregation and cell cycle progression. May participate in facilitating chromosome segregation by condensation DNA from both sides of a centrally located replisome during cell division. Not required for mini-F plasmid partitioning. Probably acts via its interaction with MukB and MukE. Overexpression results in anucleate cells. It has a calcium binding activity. This Vibrio campbellii (strain ATCC BAA-1116) protein is Chromosome partition protein MukF.